The following is a 67-amino-acid chain: Kappa-scoloptoxin(04)-Ssd1b (67 aa).

The N-terminal stretch at 1-24 (MKKTCVVSVFLVLLLLKFHDLSMG) is a signal peptide. Positions 25-36 (EEISPLKKVARR) are excised as a propeptide. 2 disulfides stabilise this stretch: Cys44–Cys55 and Cys49–Cys62.

In terms of tissue distribution, expressed by the venom gland.

Its subcellular location is the secreted. This is Kappa-scoloptoxin(04)-Ssd1b from Scolopendra dehaani (Thai centipede).